Reading from the N-terminus, the 503-residue chain is Poxin-Schlafen (503 aa).

The segment at 1–236 (MFYAHAFGGY…SKEERVDYVL (236 aa)) is poxin-like. H15 functions as the Proton donor in the catalytic mechanism. Y136 acts as the Shared with catalytic histidine of dimeric partner in catalysis. K140 functions as the Proton acceptor; shared with catalytic histidine of dimeric partner in the catalytic mechanism. Residues 237-503 (MKRLESIHHL…PDEWVSHIKF (267 aa)) are schlafen-like.

The protein in the N-terminal section; belongs to the poxin family. It in the C-terminal section; belongs to the Schlafen protein family. Subgroup poxviridae B3 subfamily. Homodimer.

It carries out the reaction 2',3'-cGAMP + H2O = Gp(2'-5')Ap(3') + H(+). Its function is as follows. Nuclease that is responsible for viral evasion of host cGAS-STING innate immunity. Cleaves 2',3'-cGAMP which is produced by host cGAS following recognition of intracellular foreign DNA and blocks the subsequent 2',3'-cGAMP-mediated activation of TMEM173/STING which normally spreads to adjacent cells and activates the interferon and NF-kappa-B immune responses. This chain is Poxin-Schlafen (OPG188), found in Cynomys gunnisoni (Gunnison's prairie dog).